We begin with the raw amino-acid sequence, 439 residues long: MQAEMNQSAEVTMKTFFTMKTRETHPQAFVAPMATATMMPIDTGDNSTEAGVPGEGKNDVFEKLKEKFMNELQKIPLPPWALIAIAIVSGLLLLTCCLCICKKCCCKKKKNKKEKGKGKKNDINMKDVKGSGGNQDDDDAETGLTEGEDKEEEAKEEEKLGKIQFSLDYDFQANQLTVGIIQAAELPALDMGGTSDPYVKVFLLPDKKKKYETKVQKKTLNPTFNESFVFKVPYQELGGKTLMMAVYDFDRFSKHDCIGQVTVLMTKVDLGQQLEEWRDLESAEKEEPEKLGDICTSLRYVPTAGKLTVCILEAKNLKKMDVGGLSDPYVKIHLLQNGKRLKKKKTTVKKNTLNPYYNESFSFEIPFEQIQKVQVCVTVLDYDKIGKNDAIGKIFVGSNASGTELRHWSDMLANPRRPIAQWHSLKPEEEVDVALGLKK.

At Met-1–Lys-74 the chain is on the vesicular side. Asn-6 and Asn-46 each carry an N-linked (GlcNAc...) asparagine glycan. A helical membrane pass occupies residues Ile-75 to Cys-101. At Lys-102 to Lys-439 the chain is on the cytoplasmic side. The segment at Lys-113–Lys-155 is disordered. Positions Lys-119 to Lys-129 are enriched in basic and acidic residues. Acidic residues predominate over residues Gln-135–Glu-151. The phospholipid binding stretch occupies residues Glu-153–Asn-399. C2 domains lie at Lys-159–Arg-278 and Lys-290–His-423. Leu-189, Asp-190, Asp-196, Asp-248, Phe-249, Asp-250, Ser-253, Lys-254, Asp-256, Asp-321, Asp-327, Asp-381, Asp-383, and Asp-389 together coordinate Ca(2+).

This sequence belongs to the synaptotagmin family. In terms of assembly, homodimer or homotrimer (possible). The cofactor is Ca(2+). Spinal cord, brainstem, midbrain and electric organ.

Its subcellular location is the cytoplasmic vesicle. The protein localises to the secretory vesicle. It localises to the synaptic vesicle membrane. It is found in the synapse. Its function is as follows. May have a regulatory role in the membrane interactions during trafficking of synaptic vesicles at the active zone of the synapse. It binds acidic phospholipids with a specificity that requires the presence of both an acidic head group and a diacyl backbone. The chain is Synaptotagmin-B (P65-B) from Diplobatis ommata (Ocellated electric ray).